Consider the following 109-residue polypeptide: Nucleoid-associated protein VIBHAR_03086 (109 aa).

Disordered regions lie at residues 1 to 21 (MFGK…QDRM) and 88 to 109 (QKEK…KMPF).

Belongs to the YbaB/EbfC family. As to quaternary structure, homodimer.

The protein localises to the cytoplasm. It is found in the nucleoid. Its function is as follows. Binds to DNA and alters its conformation. May be involved in regulation of gene expression, nucleoid organization and DNA protection. This is Nucleoid-associated protein VIBHAR_03086 from Vibrio campbellii (strain ATCC BAA-1116).